Reading from the N-terminus, the 86-residue chain is Large ribosomal subunit protein uL23 (86 aa).

It belongs to the universal ribosomal protein uL23 family. In terms of assembly, part of the 50S ribosomal subunit. Contacts protein L29.

In terms of biological role, binds to 23S rRNA. One of the proteins that surrounds the polypeptide exit tunnel on the outside of the ribosome. This chain is Large ribosomal subunit protein uL23, found in Methanocaldococcus jannaschii (strain ATCC 43067 / DSM 2661 / JAL-1 / JCM 10045 / NBRC 100440) (Methanococcus jannaschii).